Consider the following 321-residue polypeptide: Lipoyl synthase (321 aa).

Cysteine 68, cysteine 73, cysteine 79, cysteine 94, cysteine 98, cysteine 101, and serine 308 together coordinate [4Fe-4S] cluster. Residues 80–297 (FNHGTATFMI…KALADELGFT (218 aa)) enclose the Radical SAM core domain.

The protein belongs to the radical SAM superfamily. Lipoyl synthase family. [4Fe-4S] cluster serves as cofactor.

It localises to the cytoplasm. It carries out the reaction [[Fe-S] cluster scaffold protein carrying a second [4Fe-4S](2+) cluster] + N(6)-octanoyl-L-lysyl-[protein] + 2 oxidized [2Fe-2S]-[ferredoxin] + 2 S-adenosyl-L-methionine + 4 H(+) = [[Fe-S] cluster scaffold protein] + N(6)-[(R)-dihydrolipoyl]-L-lysyl-[protein] + 4 Fe(3+) + 2 hydrogen sulfide + 2 5'-deoxyadenosine + 2 L-methionine + 2 reduced [2Fe-2S]-[ferredoxin]. Its pathway is protein modification; protein lipoylation via endogenous pathway; protein N(6)-(lipoyl)lysine from octanoyl-[acyl-carrier-protein]: step 2/2. Catalyzes the radical-mediated insertion of two sulfur atoms into the C-6 and C-8 positions of the octanoyl moiety bound to the lipoyl domains of lipoate-dependent enzymes, thereby converting the octanoylated domains into lipoylated derivatives. In Shewanella oneidensis (strain ATCC 700550 / JCM 31522 / CIP 106686 / LMG 19005 / NCIMB 14063 / MR-1), this protein is Lipoyl synthase.